We begin with the raw amino-acid sequence, 313 residues long: Ribosomal RNA small subunit methyltransferase H (313 aa).

S-adenosyl-L-methionine contacts are provided by residues 35–37, D55, F80, D102, and Q109; that span reads GGH.

This sequence belongs to the methyltransferase superfamily. RsmH family.

Its subcellular location is the cytoplasm. It carries out the reaction cytidine(1402) in 16S rRNA + S-adenosyl-L-methionine = N(4)-methylcytidine(1402) in 16S rRNA + S-adenosyl-L-homocysteine + H(+). Functionally, specifically methylates the N4 position of cytidine in position 1402 (C1402) of 16S rRNA. The polypeptide is Ribosomal RNA small subunit methyltransferase H (Shewanella frigidimarina (strain NCIMB 400)).